A 403-amino-acid polypeptide reads, in one-letter code: Shaggy-related protein kinase GSK4 (403 aa).

Residues tyrosine 71 to phenylalanine 355 form the Protein kinase domain. ATP-binding positions include valine 77–valine 85 and lysine 100. The active-site Proton acceptor is the aspartate 196.

It belongs to the protein kinase superfamily. CMGC Ser/Thr protein kinase family. GSK-3 subfamily. In terms of assembly, interacts with LIC.

The enzyme catalyses L-seryl-[protein] + ATP = O-phospho-L-seryl-[protein] + ADP + H(+). The catalysed reaction is L-threonyl-[protein] + ATP = O-phospho-L-threonyl-[protein] + ADP + H(+). In terms of biological role, probable serine-threonine kinase that may regulate brassinosteroid signaling. In Oryza sativa subsp. japonica (Rice), this protein is Shaggy-related protein kinase GSK4.